The following is a 131-amino-acid chain: MTTKRKPYVRPMTSTWWKKLPFYRFYMLREGTAVPAVWFSIELIFGLFALKHGAESWMGFVGFLQNPVVVILNLITLAAALLHTKTWFELAPKAANIIVKDEKMGPEPIIKGLWVVTAVVTVVILYVALFW.

3 helical membrane-spanning segments follow: residues 30–50 (EGTA…LFAL), 57–77 (WMGF…LITL), and 109–129 (IIKG…YVAL).

The protein belongs to the FrdC family. In terms of assembly, part of an enzyme complex containing four subunits: a flavoprotein (FrdA), an iron-sulfur protein (FrdB), and two hydrophobic anchor proteins (FrdC and FrdD).

The protein localises to the cell inner membrane. In terms of biological role, two distinct, membrane-bound, FAD-containing enzymes are responsible for the catalysis of fumarate and succinate interconversion; fumarate reductase is used in anaerobic growth, and succinate dehydrogenase is used in aerobic growth. Anchors the catalytic components of the fumarate reductase complex to the cell inner membrane, binds quinones. This is Fumarate reductase subunit C from Salmonella choleraesuis (strain SC-B67).